A 76-amino-acid polypeptide reads, in one-letter code: KANTR integral membrane protein (76 aa).

Residues 1–25 (MSPFSLLILVICAFSLFFLINLTRG) form the signal peptide. The Extracellular segment spans residues 26–34 (LSILLVFSK). A helical transmembrane segment spans residues 35–55 (NQLLALLLLSIVSLFSISLIS). Topologically, residues 56 to 76 (ALIFFDLLPSTFFGFILLFFF) are cytoplasmic.

It is found in the membrane. In Homo sapiens (Human), this protein is KANTR integral membrane protein.